Reading from the N-terminus, the 245-residue chain is Ribonuclease 3 (245 aa).

Residues 24 to 146 (YAVFLQKLGY…IIGAIYLESG (123 aa)) form the RNase III domain. Glu59 serves as a coordination point for Mg(2+). The active site involves Asp63. Residues Asn132 and Glu135 each coordinate Mg(2+). Glu135 is an active-site residue. The 71-residue stretch at 173-243 (DSKTLLQEYL…ARQAYELAIV (71 aa)) folds into the DRBM domain.

The protein belongs to the ribonuclease III family. In terms of assembly, homodimer. The cofactor is Mg(2+).

It is found in the cytoplasm. The enzyme catalyses Endonucleolytic cleavage to 5'-phosphomonoester.. Digests double-stranded RNA. Involved in the processing of primary rRNA transcript to yield the immediate precursors to the large and small rRNAs (23S and 16S). Processes some mRNAs, and tRNAs when they are encoded in the rRNA operon. Processes pre-crRNA and tracrRNA of type II CRISPR loci if present in the organism. The protein is Ribonuclease 3 of Nitrosomonas europaea (strain ATCC 19718 / CIP 103999 / KCTC 2705 / NBRC 14298).